Consider the following 728-residue polypeptide: Phosphoribosylformylglycinamidine synthase subunit PurL (728 aa).

His-40 is an active-site residue. ATP is bound by residues Tyr-43 and Lys-82. Glu-84 lines the Mg(2+) pocket. Residues Ser-85 to His-88 and Arg-107 contribute to the substrate site. Residue His-86 is the Proton acceptor of the active site. A Mg(2+)-binding site is contributed by Asp-108. Gln-231 is a substrate binding site. Asp-259 lines the Mg(2+) pocket. Residue Glu-303 to Gln-305 participates in substrate binding. Positions 483 and 520 each coordinate ATP. A Mg(2+)-binding site is contributed by Asn-521. Ser-523 serves as a coordination point for substrate.

This sequence belongs to the FGAMS family. As to quaternary structure, monomer. Part of the FGAM synthase complex composed of 1 PurL, 1 PurQ and 2 PurS subunits.

The protein localises to the cytoplasm. It carries out the reaction N(2)-formyl-N(1)-(5-phospho-beta-D-ribosyl)glycinamide + L-glutamine + ATP + H2O = 2-formamido-N(1)-(5-O-phospho-beta-D-ribosyl)acetamidine + L-glutamate + ADP + phosphate + H(+). Its pathway is purine metabolism; IMP biosynthesis via de novo pathway; 5-amino-1-(5-phospho-D-ribosyl)imidazole from N(2)-formyl-N(1)-(5-phospho-D-ribosyl)glycinamide: step 1/2. Its function is as follows. Part of the phosphoribosylformylglycinamidine synthase complex involved in the purines biosynthetic pathway. Catalyzes the ATP-dependent conversion of formylglycinamide ribonucleotide (FGAR) and glutamine to yield formylglycinamidine ribonucleotide (FGAM) and glutamate. The FGAM synthase complex is composed of three subunits. PurQ produces an ammonia molecule by converting glutamine to glutamate. PurL transfers the ammonia molecule to FGAR to form FGAM in an ATP-dependent manner. PurS interacts with PurQ and PurL and is thought to assist in the transfer of the ammonia molecule from PurQ to PurL. The chain is Phosphoribosylformylglycinamidine synthase subunit PurL from Carboxydothermus hydrogenoformans (strain ATCC BAA-161 / DSM 6008 / Z-2901).